The sequence spans 336 residues: Ribosomal RNA large subunit methyltransferase F (336 aa).

This sequence belongs to the methyltransferase superfamily. METTL16/RlmF family.

Its subcellular location is the cytoplasm. It carries out the reaction adenosine(1618) in 23S rRNA + S-adenosyl-L-methionine = N(6)-methyladenosine(1618) in 23S rRNA + S-adenosyl-L-homocysteine + H(+). Functionally, specifically methylates the adenine in position 1618 of 23S rRNA. In Yersinia pestis (strain Pestoides F), this protein is Ribosomal RNA large subunit methyltransferase F.